Reading from the N-terminus, the 549-residue chain is FMRFamide receptor (549 aa).

The Extracellular segment spans residues Met-1–Gly-117. N-linked (GlcNAc...) asparagine glycosylation is found at Asn-59, Asn-70, and Asn-93. A helical transmembrane segment spans residues Val-118 to Leu-138. The Cytoplasmic segment spans residues Ser-139 to Asp-158. Residues Thr-159–Gly-179 form a helical membrane-spanning segment. At His-180 to Phe-181 the chain is on the extracellular side. A helical transmembrane segment spans residues Phe-182–Ile-202. Residues Ala-203 to Lys-238 lie on the Cytoplasmic side of the membrane. The chain crosses the membrane as a helical span at residues Ile-239–Val-259. Over Leu-260 to Asn-289 the chain is Extracellular. The helical transmembrane segment at Ile-290–Ile-310 threads the bilayer. Residues Leu-311–Thr-341 are Cytoplasmic-facing. A helical transmembrane segment spans residues Met-342 to Ile-362. The Extracellular segment spans residues Ser-363–Lys-376. The chain crosses the membrane as a helical span at residues Ile-377 to Gly-397. At Glu-398–Phe-549 the chain is on the cytoplasmic side.

Belongs to the G-protein coupled receptor 1 family. In terms of tissue distribution, expressed in ovaries, heads and bodies. Expressed in dopaminergic neurons.

It localises to the cell membrane. Its function is as follows. A receptor for the FMRFamide peptides. Reacts with high affinity to FMRFamide and intrinsic FMRFamide-related peptides. By stimulating intracellular calcium signaling through the inositol 1,4,5-trisphosphate receptor, Itpr, in dopaminergic neurons, may be involved in the maintenance of neuronal excitability and in the regulation of flight bout duration. The sequence is that of FMRFamide receptor from Drosophila melanogaster (Fruit fly).